The following is a 341-amino-acid chain: MEIKCSERLIIPKEYKTELDLKETAIAIKEVKDCFERALAKQLNLIRVSAPLFVRCDKGLNDNLNGVERPVKFTVKDDNEAAVEIVHSLAKWKRMALYRYNFNADEGLYTDMNAIRRDEELDNTHSIYVDQWDWERIIKKEDRNEEYLKDIVRKIFKAFKETEEHINKLYPFLGEVLPEEVFFMTTQELEDMFPDLTAKEREDAITKEKKAVFLMKIGKTLESGEKHDGRAPDYDDWELNGDILFWNPVLNKAFELSSMGIRVDEESLLKQLKLANCEERKELQFHKMLLEKKLPYTIGGGIGQSRMCMLFLKKAHIGEVQSSIWPEEMIKFCEEKGMTIL.

Belongs to the class-II aminoacyl-tRNA synthetase family. AsnA subfamily.

The protein localises to the cytoplasm. It carries out the reaction L-aspartate + NH4(+) + ATP = L-asparagine + AMP + diphosphate + H(+). The protein operates within amino-acid biosynthesis; L-asparagine biosynthesis; L-asparagine from L-aspartate (ammonia route): step 1/1. This is Aspartate--ammonia ligase from Clostridium tetani (strain Massachusetts / E88).